The chain runs to 378 residues: Nitronate monooxygenase (378 aa).

Positions 1 to 15 (MHFPGHSSKKEESAQ) are excised as a propeptide. 37–39 (PMY) serves as a coordination point for FMN. His-196 (proton acceptor) is an active-site residue. Substrate is bound at residue His-196. FMN is bound by residues 229–231 (AGG) and 252–253 (GT).

Belongs to the nitronate monooxygenase family. NMO class II subfamily. As to quaternary structure, homodimer. The cofactor is FMN.

It catalyses the reaction ethylnitronate + O2 = chemical entity + acetaldehyde + nitrite + H(+). In terms of biological role, catalyzes the oxidation of alkyl nitronates to produce the corresponding carbonyl compounds and nitrites. Anionic forms of nitroalkanes are much better substrates than are neutral forms. This is Nitronate monooxygenase (ncd-2) from Neurospora crassa (strain ATCC 24698 / 74-OR23-1A / CBS 708.71 / DSM 1257 / FGSC 987).